Reading from the N-terminus, the 429-residue chain is Phosphoribosylamine--glycine ligase (429 aa).

The 208-residue stretch at 109 to 316 (KDFLARHQIP…LVDLCLAACD (208 aa)) folds into the ATP-grasp domain. 135–196 (LREKGAPIVI…EEFLDGEEAS (62 aa)) lines the ATP pocket. Mg(2+) is bound by residues Glu-286 and Asn-288.

Belongs to the GARS family. In terms of assembly, monomer. It depends on Mg(2+) as a cofactor. The cofactor is Mn(2+).

The enzyme catalyses 5-phospho-beta-D-ribosylamine + glycine + ATP = N(1)-(5-phospho-beta-D-ribosyl)glycinamide + ADP + phosphate + H(+). The protein operates within purine metabolism; IMP biosynthesis via de novo pathway; N(1)-(5-phospho-D-ribosyl)glycinamide from 5-phospho-alpha-D-ribose 1-diphosphate: step 2/2. The protein is Phosphoribosylamine--glycine ligase of Salmonella typhimurium (strain LT2 / SGSC1412 / ATCC 700720).